The following is a 257-amino-acid chain: E3 ubiquitin-protein ligase RNF170 (257 aa).

Topologically, residues 1–24 (MADNQEGRPYFPLDEGSIIEGVSD) are lumenal. Residues 25-45 (QVIVVVLLSFVAVGSLLYLLL) traverse the membrane as a helical segment. Topologically, residues 46–200 (RNDEQNIHPE…GGLFWMFRIR (155 aa)) are cytoplasmic. Residues 87-130 (CPVCLQQATFPVETNCGHLFCGSCIIAYWRYGSWLGAINCPICR) form an RING-type zinc finger. Residues 201–221 (IVLCLLGALFYLVSPLDIIPE) traverse the membrane as a helical segment. A topological domain (lumenal) is located at residue Ala222. A helical membrane pass occupies residues 223-243 (VFGLLGFLDDFFVLFLLLIYI). The Cytoplasmic portion of the chain corresponds to 244–257 (SIMYREVVTQRLYR).

The protein resides in the endoplasmic reticulum membrane. It carries out the reaction S-ubiquitinyl-[E2 ubiquitin-conjugating enzyme]-L-cysteine + [acceptor protein]-L-lysine = [E2 ubiquitin-conjugating enzyme]-L-cysteine + N(6)-ubiquitinyl-[acceptor protein]-L-lysine.. It participates in protein modification; protein ubiquitination. Its function is as follows. E3 ubiquitin-protein ligase that plays an essential role in stimulus-induced inositol 1,4,5-trisphosphate receptor (ITPR) ubiquitination and degradation via the endoplasmic reticulum-associated degradation (ERAD) pathway. Also involved in ITPR turnover in resting cells. In Xenopus tropicalis (Western clawed frog), this protein is E3 ubiquitin-protein ligase RNF170 (rnf170).